The primary structure comprises 348 residues: uncharacterized protein (348 aa).

Its function is as follows. May be involved in apoptosis regulation. This is an uncharacterized protein from Rattus norvegicus (Rat).